We begin with the raw amino-acid sequence, 100 residues long: NADH-quinone oxidoreductase subunit K (100 aa).

Helical transmembrane passes span 4-24 (LTHG…GLVI), 28-48 (LLFM…AFVV), and 60-80 (IMYI…LALL).

The protein belongs to the complex I subunit 4L family. NDH-1 is composed of 13 different subunits. Subunits NuoA, H, J, K, L, M, N constitute the membrane sector of the complex.

The protein localises to the cell inner membrane. It carries out the reaction a quinone + NADH + 5 H(+)(in) = a quinol + NAD(+) + 4 H(+)(out). In terms of biological role, NDH-1 shuttles electrons from NADH, via FMN and iron-sulfur (Fe-S) centers, to quinones in the respiratory chain. The immediate electron acceptor for the enzyme in this species is believed to be ubiquinone. Couples the redox reaction to proton translocation (for every two electrons transferred, four hydrogen ions are translocated across the cytoplasmic membrane), and thus conserves the redox energy in a proton gradient. The chain is NADH-quinone oxidoreductase subunit K from Klebsiella pneumoniae (strain 342).